A 155-amino-acid polypeptide reads, in one-letter code: Cytochrome c-550 (155 aa).

An N-terminal signal peptide occupies residues 1–20; sequence MKISIYATLAAITLALPAAA. Gln-21 bears the Pyrrolidone carboxylic acid mark. Heme c contacts are provided by Cys-35, Cys-38, His-39, and Met-120. Residues 150 to 155 constitute a propeptide that is removed on maturation; it reads AEGESN.

Binds 1 heme c group covalently per subunit.

In Paracoccus denitrificans, this protein is Cytochrome c-550 (cycA).